Consider the following 335-residue polypeptide: GTPase Obg (335 aa).

Positions 1-159 (MKFVDSASIR…REIGLELSIM (159 aa)) constitute an Obg domain. The OBG-type G domain maps to 160–332 (ADIGLLGMPN…LVAGLFKLVK (173 aa)). GTP-binding positions include 166–173 (GMPNAGKS), 191–195 (FTTLH), 212–215 (DIPG), 282–285 (NKMD), and 313–315 (SAL). Residues serine 173 and threonine 193 each contribute to the Mg(2+) site.

It belongs to the TRAFAC class OBG-HflX-like GTPase superfamily. OBG GTPase family. As to quaternary structure, monomer. The cofactor is Mg(2+).

The protein resides in the cytoplasm. Functionally, an essential GTPase which binds GTP, GDP and possibly (p)ppGpp with moderate affinity, with high nucleotide exchange rates and a fairly low GTP hydrolysis rate. Plays a role in control of the cell cycle, stress response, ribosome biogenesis and in those bacteria that undergo differentiation, in morphogenesis control. The polypeptide is GTPase Obg (Ruthia magnifica subsp. Calyptogena magnifica).